The following is a 98-amino-acid chain: Ribonuclease kappa (98 aa).

2 helical membrane-spanning segments follow: residues 13-33 (ACGIVLSAWGVIMLIMLGIFF) and 65-85 (VSYNCFIAASLYLLLGGFSFC).

This sequence belongs to the RNase K family. Interacts with the proton translocation complex V0 of the V-ATPase. Interacts with ATP6AP1. As to expression, expressed in brain (at protein level).

It is found in the endomembrane system. Its subcellular location is the cytoplasmic vesicle. It localises to the clathrin-coated vesicle membrane. Its function is as follows. Endoribonuclease which preferentially cleaves ApU and ApG phosphodiester bonds. Hydrolyzes UpU bonds at a lower rate. Regulates the activity of vacuolar (H+)-ATPase (V-ATPase) which is responsible for acidifying and maintaining the pH of intracellular compartments. Required at an early stage of receptor-mediated endocytosis. The polypeptide is Ribonuclease kappa (RNASEK) (Bos taurus (Bovine)).